Reading from the N-terminus, the 2225-residue chain is Multifunctional protein CAD (2225 aa).

Ala-2 is modified (N-acetylalanine). A GATase (Glutamine amidotransferase) region spans residues Ala-2–Pro-365. 3 residues coordinate L-glutamine: Ser-44, Gly-222, and Gly-224. One can recognise a Glutamine amidotransferase type-1 domain in the interval Arg-177–Gly-363. The active-site Nucleophile; for GATase activity is Cys-252. The L-glutamine site is built by Leu-253, Gln-256, Asn-294, Gly-296, and Phe-297. Residues His-336 and Glu-338 each act as for GATase activity in the active site. Residues Gly-366–Arg-394 are linker. Residues Lys-395–Pro-933 form a CPSase A region. The CPSase (Carbamoyl phosphate synthase) stretch occupies residues Lys-395–Cys-1455. At Thr-456 the chain carries Phosphothreonine; by MAPK1. Residues Arg-515, Arg-555, Gly-561, Gly-562, Lys-592, Glu-599, Gly-625, Ile-626, His-627, Gln-668, and Glu-682 each contribute to the ATP site. In terms of domain architecture, ATP-grasp 1 spans Ala-519 to Leu-711. Mg(2+) contacts are provided by Gln-668, Glu-682, and Asn-684. Mn(2+) contacts are provided by Gln-668, Glu-682, and Asn-684. Lys-747 carries the post-translational modification N6-acetyllysine. The interval His-934 to Cys-1455 is CPSase B. Phosphoserine is present on Ser-1038. One can recognise an ATP-grasp 2 domain in the interval Ser-1052–Met-1243. Arg-1088, Lys-1127, Ile-1129, Glu-1134, Gly-1159, Val-1160, His-1161, Ser-1162, Gln-1202, and Glu-1214 together coordinate ATP. Mg(2+) contacts are provided by Gln-1202, Glu-1214, and Asn-1216. 3 residues coordinate Mn(2+): Gln-1202, Glu-1214, and Asn-1216. Positions Phe-1308–Val-1462 constitute an MGS-like domain. Ser-1406 carries the phosphoserine; by PKA modification. Lys-1411 is modified (N6-acetyllysine). Residues Met-1456–Leu-1788 are DHOase (dihydroorotase). Zn(2+)-binding residues include His-1471 and His-1473. (S)-dihydroorotate-binding residues include Arg-1475 and Asn-1505. Zn(2+)-binding residues include Lys-1556, His-1590, Cys-1613, His-1614, and Glu-1637. N6-carboxylysine is present on Lys-1556. Arg-1661 contacts (S)-dihydroorotate. Asp-1686 is a Zn(2+) binding site. Asp-1686 functions as the For DHOase activity in the catalytic mechanism. Positions 1690 and 1702 each coordinate (S)-dihydroorotate. The tract at residues Arg-1789–Leu-1917 is linker. The segment at Pro-1813–His-1911 is disordered. The segment covering Pro-1825–Pro-1834 has biased composition (low complexity). Ser-1859 is subject to Phosphoserine; by RPS6KB1 and PKA. Positions Glu-1866–Glu-1878 are enriched in basic and acidic residues. Ser-1873 carries the phosphoserine; by PKC; in vitro modification. The residue at position 1884 (Thr-1884) is a Phosphothreonine. A compositionally biased stretch (polar residues) spans Ala-1899–His-1911. A phosphoserine mark is found at Ser-1900 and Ser-1938. The segment at Leu-1918 to Phe-2225 is ATCase (Aspartate transcarbamylase). Carbamoyl phosphate is bound by residues Arg-1975 and Thr-1976. Lys-2003 is an L-aspartate binding site. Residues Arg-2024, His-2052, and Gln-2055 each contribute to the carbamoyl phosphate site. L-aspartate-binding residues include Arg-2085 and Arg-2146. 2 residues coordinate carbamoyl phosphate: Met-2185 and Pro-2186.

The protein in the N-terminal section; belongs to the CarA family. In the 2nd section; belongs to the CarB family. This sequence in the 3rd section; belongs to the metallo-dependent hydrolases superfamily. DHOase family. CAD subfamily. It in the C-terminal section; belongs to the aspartate/ornithine carbamoyltransferase superfamily. ATCase family. Homohexamer. Interacts with CIPC. Zn(2+) is required as a cofactor. Requires Mg(2+) as cofactor. The cofactor is Mn(2+). Post-translationally, activated by MAP kinase (Erk1/2) phosphorylation just prior to the S phase of the cell cycle, when the demand for pyrimidine nucleotides is greatest, and down-regulated as the cells emerge from S phase by protein kinase A (PKA) phosphorylation. Phosphorylation at Ser-1859 by RPS6KB1 downstream of MTOR promotes oligomerization and stimulates dihydroorotase activity. Phosphorylation at Ser-1406 reduces sensitivity to feedback inhibition by UTP.

It is found in the cytoplasm. It localises to the nucleus. It carries out the reaction hydrogencarbonate + L-glutamine + 2 ATP + H2O = carbamoyl phosphate + L-glutamate + 2 ADP + phosphate + 2 H(+). The enzyme catalyses L-glutamine + H2O = L-glutamate + NH4(+). The catalysed reaction is hydrogencarbonate + NH4(+) + 2 ATP = carbamoyl phosphate + 2 ADP + phosphate + 2 H(+). It catalyses the reaction carbamoyl phosphate + L-aspartate = N-carbamoyl-L-aspartate + phosphate + H(+). It carries out the reaction (S)-dihydroorotate + H2O = N-carbamoyl-L-aspartate + H(+). It functions in the pathway pyrimidine metabolism; UMP biosynthesis via de novo pathway; (S)-dihydroorotate from bicarbonate: step 1/3. It participates in pyrimidine metabolism; UMP biosynthesis via de novo pathway; (S)-dihydroorotate from bicarbonate: step 2/3. The protein operates within pyrimidine metabolism; UMP biosynthesis via de novo pathway; (S)-dihydroorotate from bicarbonate: step 3/3. With respect to regulation, allosterically regulated and controlled by phosphorylation. 5-phosphoribose 1-diphosphate (PRPP) is an activator while UMP and UTP are inhibitors of the CPSase reaction. In terms of biological role, multifunctional protein that encodes the first 3 enzymatic activities of the de novo pyrimidine pathway: carbamoylphosphate synthetase (CPSase; EC 6.3.5.5), aspartate transcarbamylase (ATCase; EC 2.1.3.2) and dihydroorotase (DHOase; EC 3.5.2.3). The CPSase-function is accomplished in 2 steps, by a glutamine-dependent amidotransferase activity (GATase) that binds and cleaves glutamine to produce ammonia, followed by an ammonium-dependent carbamoyl phosphate synthetase, which reacts with the ammonia, hydrogencarbonate and ATP to form carbamoyl phosphate. The endogenously produced carbamoyl phosphate is sequestered and channeled to the ATCase active site. ATCase then catalyzes the formation of carbamoyl-L-aspartate from L-aspartate and carbamoyl phosphate. In the last step, DHOase catalyzes the cyclization of carbamoyl aspartate to dihydroorotate. The polypeptide is Multifunctional protein CAD (CAD) (Mesocricetus auratus (Golden hamster)).